A 384-amino-acid chain; its full sequence is Putative spore germination protein YfkR (384 aa).

The first 20 residues, 1–20 (MKKTIYKCVLPLLICILLTG), serve as a signal peptide directing secretion. Cys21 carries N-palmitoyl cysteine lipidation. Cys21 carries S-diacylglycerol cysteine lipidation.

Belongs to the GerABKC lipoprotein family.

The protein localises to the cell membrane. In terms of biological role, may be involved in spore germination. The sequence is that of Putative spore germination protein YfkR (yfkR) from Bacillus subtilis (strain 168).